The sequence spans 103 residues: uncharacterized protein (103 aa).

The segment at 1–103 (MAGARRRARC…WRGGSCTSQR (103 aa)) is disordered. The span at 35-44 (GSGQPRWWPW) shows a compositional bias: low complexity. Basic residues-rich tracts occupy residues 55–65 (RRPGPGRRARS) and 74–84 (RPPHSRTRARR).

Belongs to the epstein-barr virus RPMS1 family.

This is an uncharacterized protein from Homo sapiens (Human).